A 396-amino-acid polypeptide reads, in one-letter code: Elongation factor Tu 1 (396 aa).

The region spanning 10 to 206 is the tr-type G domain; that stretch reads KPHVNVGTIG…ALDTYIPTPE (197 aa). A G1 region spans residues 19-26; it reads GHVDHGKT. 19–26 contributes to the GTP binding site; sequence GHVDHGKT. Threonine 26 is a binding site for Mg(2+). A G2 region spans residues 60–64; the sequence is GITIN. A G3 region spans residues 81 to 84; the sequence is DCPG. Residues 81–85 and 136–139 contribute to the GTP site; these read DCPGH and NKCD. The tract at residues 136–139 is G4; it reads NKCD. A G5 region spans residues 174-176; sequence SAK.

Belongs to the TRAFAC class translation factor GTPase superfamily. Classic translation factor GTPase family. EF-Tu/EF-1A subfamily. As to quaternary structure, monomer.

It localises to the cytoplasm. It catalyses the reaction GTP + H2O = GDP + phosphate + H(+). Its function is as follows. GTP hydrolase that promotes the GTP-dependent binding of aminoacyl-tRNA to the A-site of ribosomes during protein biosynthesis. This Acidovorax sp. (strain JS42) protein is Elongation factor Tu 1.